The primary structure comprises 365 residues: MVQPVFDAAVLSGRADIPSQFIWPEGESPTPDAAEELHVPLIDIGGMLSGDPRATAEVTRLVGEACERHGFFQVVNHGIDAELLADAHRCVDAFFTMPLPEKQRALRRPGESCGYASSFTGRFASKLPWKETLSFRSCPSDPALVVDYIVATLGEDHRRLGEVYARYCSEMSRLSLEIMEVLGESLGVGRAHYRRFFEGNDSIMRLNYYPPCQRPMETLGTGPHCDPTSLTILHQDNVGGLQVHTEGRWRSIRPRADAFVVNIGDTFMALSNGRYKSCLHRAVVNSKVPRKSLAFFLCPEMDKVVAPPGTLVDAANPRAYPDFTWRSLLDFTQKHYRADMKTLEVFSSWIVQQQQGQLLPPLASH.

The region spanning glycine 199 to proline 299 is the Fe2OG dioxygenase domain. Residues histidine 224, aspartate 226, and histidine 280 each contribute to the Fe cation site. Residue arginine 290 is part of the active site.

Belongs to the iron/ascorbate-dependent oxidoreductase family. GA20OX subfamily. Requires Fe cation as cofactor. L-ascorbate is required as a cofactor. Not detected in nodes and the ear of the elongating stem.

It carries out the reaction gibberellin A12 + 2 2-oxoglutarate + 3 O2 + H(+) = gibberellin A9 + 2 succinate + 3 CO2 + 2 H2O. The catalysed reaction is gibberellin A53 + 2 2-oxoglutarate + 3 O2 + H(+) = gibberellin A20 + 2 succinate + 3 CO2 + 2 H2O. In terms of biological role, key oxidase enzyme in the biosynthesis of gibberellin that catalyzes the conversion of GA12 and GA53 to GA9 and GA20 respectively, via a three-step oxidation at C-20 of the GA skeleton. The polypeptide is Gibberellin 20 oxidase 1-B (GA20ox1B) (Triticum aestivum (Wheat)).